Reading from the N-terminus, the 296-residue chain is Large ribosomal subunit protein uL29m (296 aa).

A mitochondrion-targeting transit peptide spans 1–19 (MSITSIRALLRSAVSLART).

It belongs to the universal ribosomal protein uL29 family. Component of the mitochondrial large ribosomal subunit. Mature mitochondrial ribosomes consist of a small (37S) and a large (54S) subunit. The 37S subunit contains at least 33 different proteins and 1 molecule of RNA (15S). The 54S subunit contains at least 45 different proteins and 1 molecule of RNA (21S).

The protein localises to the mitochondrion. The polypeptide is Large ribosomal subunit protein uL29m (MRPL4) (Lodderomyces elongisporus (strain ATCC 11503 / CBS 2605 / JCM 1781 / NBRC 1676 / NRRL YB-4239) (Yeast)).